We begin with the raw amino-acid sequence, 635 residues long: 1-deoxy-D-xylulose-5-phosphate synthase (635 aa).

Thiamine diphosphate is bound by residues His78 and 119–121 (GHS). Asp151 contacts Mg(2+). Thiamine diphosphate is bound by residues 152–153 (GA), Asn180, Tyr289, and Glu371. A Mg(2+)-binding site is contributed by Asn180.

Belongs to the transketolase family. DXPS subfamily. In terms of assembly, homodimer. Requires Mg(2+) as cofactor. The cofactor is thiamine diphosphate.

The enzyme catalyses D-glyceraldehyde 3-phosphate + pyruvate + H(+) = 1-deoxy-D-xylulose 5-phosphate + CO2. Its pathway is metabolic intermediate biosynthesis; 1-deoxy-D-xylulose 5-phosphate biosynthesis; 1-deoxy-D-xylulose 5-phosphate from D-glyceraldehyde 3-phosphate and pyruvate: step 1/1. Functionally, catalyzes the acyloin condensation reaction between C atoms 2 and 3 of pyruvate and glyceraldehyde 3-phosphate to yield 1-deoxy-D-xylulose-5-phosphate (DXP). This chain is 1-deoxy-D-xylulose-5-phosphate synthase, found in Bartonella tribocorum (strain CIP 105476 / IBS 506).